The primary structure comprises 128 residues: Probable prefoldin subunit 6 (128 aa).

Belongs to the prefoldin subunit beta family. As to quaternary structure, heterohexamer of two PFD-alpha type and four PFD-beta type subunits.

It is found in the cytoplasm. In terms of biological role, binds specifically to cytosolic chaperonin (c-CPN) and transfers target proteins to it. Binds to nascent polypeptide chain and promotes folding in an environment in which there are many competing pathways for nonnative proteins. Required for positioning of the mitotic spindle. This is Probable prefoldin subunit 6 from Caenorhabditis briggsae.